The following is a 385-amino-acid chain: Succinate--CoA ligase [ADP-forming] subunit beta (385 aa).

One can recognise an ATP-grasp domain in the interval 9 to 243; it reads KEILSAYGIP…YSQLDTLEIN (235 aa). Residues Lys-45, 52–54, Glu-98, Val-101, and Glu-106 each bind ATP; that span reads GRG. 2 residues coordinate Mg(2+): Asn-198 and Asp-212. Substrate is bound by residues Asn-263 and 320–322; that span reads GIM.

This sequence belongs to the succinate/malate CoA ligase beta subunit family. As to quaternary structure, heterotetramer of two alpha and two beta subunits. It depends on Mg(2+) as a cofactor.

The catalysed reaction is succinate + ATP + CoA = succinyl-CoA + ADP + phosphate. It carries out the reaction GTP + succinate + CoA = succinyl-CoA + GDP + phosphate. It participates in carbohydrate metabolism; tricarboxylic acid cycle; succinate from succinyl-CoA (ligase route): step 1/1. In terms of biological role, succinyl-CoA synthetase functions in the citric acid cycle (TCA), coupling the hydrolysis of succinyl-CoA to the synthesis of either ATP or GTP and thus represents the only step of substrate-level phosphorylation in the TCA. The beta subunit provides nucleotide specificity of the enzyme and binds the substrate succinate, while the binding sites for coenzyme A and phosphate are found in the alpha subunit. The polypeptide is Succinate--CoA ligase [ADP-forming] subunit beta (Geobacter sulfurreducens (strain ATCC 51573 / DSM 12127 / PCA)).